A 224-amino-acid chain; its full sequence is Small ribosomal subunit protein uS3 (224 aa).

Residues 39–107 (IREFLKKKPS…DVWVEIAEVK (69 aa)) enclose the KH type-2 domain.

It belongs to the universal ribosomal protein uS3 family. Part of the 30S ribosomal subunit. Forms a tight complex with proteins S10 and S14.

Binds the lower part of the 30S subunit head. Binds mRNA in the 70S ribosome, positioning it for translation. In Chlamydia muridarum (strain MoPn / Nigg), this protein is Small ribosomal subunit protein uS3.